A 262-amino-acid polypeptide reads, in one-letter code: Phosphatidylserine decarboxylase proenzyme (262 aa).

Residues Asp-86, His-142, and Ser-226 each act as charge relay system; for autoendoproteolytic cleavage activity in the active site. Catalysis depends on Ser-226, which acts as the Schiff-base intermediate with substrate; via pyruvic acid; for decarboxylase activity. The residue at position 226 (Ser-226) is a Pyruvic acid (Ser); by autocatalysis.

This sequence belongs to the phosphatidylserine decarboxylase family. PSD-B subfamily. Prokaryotic type I sub-subfamily. In terms of assembly, heterodimer of a large membrane-associated beta subunit and a small pyruvoyl-containing alpha subunit. Requires pyruvate as cofactor. In terms of processing, is synthesized initially as an inactive proenzyme. Formation of the active enzyme involves a self-maturation process in which the active site pyruvoyl group is generated from an internal serine residue via an autocatalytic post-translational modification. Two non-identical subunits are generated from the proenzyme in this reaction, and the pyruvate is formed at the N-terminus of the alpha chain, which is derived from the carboxyl end of the proenzyme. The autoendoproteolytic cleavage occurs by a canonical serine protease mechanism, in which the side chain hydroxyl group of the serine supplies its oxygen atom to form the C-terminus of the beta chain, while the remainder of the serine residue undergoes an oxidative deamination to produce ammonia and the pyruvoyl prosthetic group on the alpha chain. During this reaction, the Ser that is part of the protease active site of the proenzyme becomes the pyruvoyl prosthetic group, which constitutes an essential element of the active site of the mature decarboxylase.

The protein resides in the cell membrane. The catalysed reaction is a 1,2-diacyl-sn-glycero-3-phospho-L-serine + H(+) = a 1,2-diacyl-sn-glycero-3-phosphoethanolamine + CO2. It participates in phospholipid metabolism; phosphatidylethanolamine biosynthesis; phosphatidylethanolamine from CDP-diacylglycerol: step 2/2. Its function is as follows. Catalyzes the formation of phosphatidylethanolamine (PtdEtn) from phosphatidylserine (PtdSer). This chain is Phosphatidylserine decarboxylase proenzyme, found in Bacillus cereus (strain ZK / E33L).